Here is an 89-residue protein sequence, read N- to C-terminus: Cornifin-B (89 aa).

The interval 1-29 (MSSQQQKQPCTPPPQLQQQQVKQPCQPPP) is disordered. 8 tandem repeats follow at residues 3–14 (SQQQKQPCTPPP), 18–29 (QQQVKQPCQPPP), 31–38 (EPCIPKTK), 39–46 (EPCHPKVP), 47–54 (EPCHPKVP), 55–62 (EPCQPKVP), 63–70 (EPCHPKVP), and 71–78 (EPCPSIVT). The tract at residues 3-29 (SQQQKQPCTPPPQLQQQQVKQPCQPPP) is 2 X 12 AA approximate repeats. The interval 31–78 (EPCIPKTKEPCHPKVPEPCHPKVPEPCQPKVPEPCHPKVPEPCPSIVT) is 6 X 8 AA approximate tandem repeats.

It belongs to the cornifin (SPRR) family. Post-translationally, the N-terminus is blocked. As to expression, suprabasal layers of squamous-differentiated tissues such as epidermis, esophagus, tongue and trachea.

The protein localises to the cytoplasm. Cross-linked envelope protein of keratinocytes. It is a keratinocyte protein that first appears in the cell cytosol, but ultimately becomes cross-linked to membrane proteins by transglutaminase. All that results in the formation of an insoluble envelope beneath the plasma membrane. Can function as both amine donor and acceptor in transglutaminase-mediated cross-linkage. The polypeptide is Cornifin-B (SPRR1B) (Homo sapiens (Human)).